The primary structure comprises 204 residues: FMN-dependent NADH:quinone oxidoreductase (204 aa).

FMN contacts are provided by residues S9, S15 to S17, M95 to F98, and S139 to G142.

It belongs to the azoreductase type 1 family. In terms of assembly, homodimer. FMN is required as a cofactor.

It catalyses the reaction 2 a quinone + NADH + H(+) = 2 a 1,4-benzosemiquinone + NAD(+). The enzyme catalyses N,N-dimethyl-1,4-phenylenediamine + anthranilate + 2 NAD(+) = 2-(4-dimethylaminophenyl)diazenylbenzoate + 2 NADH + 2 H(+). Its function is as follows. Quinone reductase that provides resistance to thiol-specific stress caused by electrophilic quinones. Functionally, also exhibits azoreductase activity. Catalyzes the reductive cleavage of the azo bond in aromatic azo compounds to the corresponding amines. This is FMN-dependent NADH:quinone oxidoreductase from Methylocella silvestris (strain DSM 15510 / CIP 108128 / LMG 27833 / NCIMB 13906 / BL2).